Consider the following 132-residue polypeptide: Fluoride-specific ion channel FluC 2 (132 aa).

4 consecutive transmembrane segments (helical) span residues 8–28 (LQLE…GALL), 41–61 (LLVN…PAAP), 66–86 (LLGI…LAAV), and 96–116 (AALG…ALGF). Positions 73 and 76 each coordinate Na(+).

This sequence belongs to the fluoride channel Fluc/FEX (TC 1.A.43) family.

The protein resides in the cell inner membrane. It carries out the reaction fluoride(in) = fluoride(out). Na(+) is not transported, but it plays an essential structural role and its presence is essential for fluoride channel function. In terms of biological role, fluoride-specific ion channel. Important for reducing fluoride concentration in the cell, thus reducing its toxicity. This is Fluoride-specific ion channel FluC 2 from Synechococcus sp. (strain CC9605).